A 256-amino-acid polypeptide reads, in one-letter code: Putative transcription factor 001R (256 aa).

Functionally, transcription activation. This is Putative transcription factor 001R from Frog virus 3 (isolate Goorha) (FV-3).